We begin with the raw amino-acid sequence, 264 residues long: MKQYLELMRLVRTQGISKVDRTNTGTLSIFGHQMRFNLSHGFPLITTKRCHLRSIIYELLWFLNGDTNINYLRKHHVTIWDEWINEKGDLGPIYGRQWRAWGTADGSYIDQLSDVMLQLKHNPDSRRIIVSAWNVGEIKQMALAPCHVLFQFYVANGVLSCQLYQRSCDMFLGLPFNISSYALLIHMVAQQCDLQLGEFIWTGGDIHLYRNHLKQTDLQLKRNPRPLPQLIIKRRPASLFQYQFDDFYLSGYDPHPAIKAQVAV.

A dUMP-binding site is contributed by arginine 21. Histidine 51 serves as a coordination point for (6R)-5,10-methylene-5,6,7,8-tetrahydrofolate. 126 to 127 (RR) provides a ligand contact to dUMP. The active-site Nucleophile is cysteine 146. DUMP contacts are provided by residues 166–169 (RSCD), asparagine 177, and 207–209 (HLY). (6R)-5,10-methylene-5,6,7,8-tetrahydrofolate is bound at residue aspartate 169. Alanine 263 is a (6R)-5,10-methylene-5,6,7,8-tetrahydrofolate binding site.

This sequence belongs to the thymidylate synthase family. Bacterial-type ThyA subfamily. As to quaternary structure, homodimer.

The protein localises to the cytoplasm. The enzyme catalyses dUMP + (6R)-5,10-methylene-5,6,7,8-tetrahydrofolate = 7,8-dihydrofolate + dTMP. It functions in the pathway pyrimidine metabolism; dTTP biosynthesis. Its function is as follows. Catalyzes the reductive methylation of 2'-deoxyuridine-5'-monophosphate (dUMP) to 2'-deoxythymidine-5'-monophosphate (dTMP) while utilizing 5,10-methylenetetrahydrofolate (mTHF) as the methyl donor and reductant in the reaction, yielding dihydrofolate (DHF) as a by-product. This enzymatic reaction provides an intracellular de novo source of dTMP, an essential precursor for DNA biosynthesis. In Baumannia cicadellinicola subsp. Homalodisca coagulata, this protein is Thymidylate synthase.